A 466-amino-acid chain; its full sequence is 55 kDa erythrocyte membrane protein (466 aa).

At Thr2 the chain carries N-acetylthreonine. Phosphoserine is present on residues Ser13 and Ser19. Residue Thr49 is modified to Phosphothreonine. 3 positions are modified to phosphoserine: Ser52, Ser57, and Ser110. Residues 71 to 152 (LIQFEKVTEE…MISLKVIPNQ (82 aa)) form the PDZ domain. The region spanning 158–228 (ALQMFMRAQF…PSPELQEWRV (71 aa)) is the SH3 domain. Ser243 bears the Phosphoserine mark. The tract at residues 268–466 (VVSYEEVVRL…PQWVPVSWVY (199 aa)) is interaction with PALS1. Residues 282-451 (RKTLVLIGAS…TLKKLQEAFD (170 aa)) form the Guanylate kinase-like domain.

The protein belongs to the MAGUK family. In terms of assembly, heterodimer with PALS1. Interacts with DLG5 and NF2. Interacts (via guanylate kinase-like domain) with WHRN (via third PDZ domain). In terms of processing, palmitoylated. Ubiquitous.

It localises to the cell membrane. The protein resides in the cell projection. Its subcellular location is the stereocilium. Essential regulator of neutrophil polarity. Regulates neutrophil polarization by regulating AKT1 phosphorylation through a mechanism that is independent of PIK3CG activity. The sequence is that of 55 kDa erythrocyte membrane protein (MPP1) from Homo sapiens (Human).